The following is a 240-amino-acid chain: MIYSKVFLKLHWGFSVVKPSAAKAKSGFYLPPPTTLIGALSYGKFRGIDNTNLGKIYGSPAYNFRNVMATARLESEGAYTEDIVRNVISYFQRKDRRDNPRYIYGVIPTGKVYMPNGTLVVVYVTDSMSKEELEKLSWSITRIGGKECLVSVENVEIGEAKKVSGRMKTRYYFRDTVKVVGKKEFLEYVTFWEENGYIWGKEGGPIRYILPVATYPLASKEVEVEAKEAYEVGGEYVVFS.

It belongs to the CRISPR-associated protein Cas5 family. Subtype I-A/Apern subfamily. In terms of assembly, part of the aCascade ribonucleoprotein complex.

Its function is as follows. CRISPR (clustered regularly interspaced short palindromic repeat) is an adaptive immune system that provides protection against mobile genetic elements (viruses, transposable elements and conjugative plasmids). CRISPR clusters contain spacers, sequences complementary to antecedent mobile elements, and target invading nucleic acids. CRISPR clusters are transcribed and processed into CRISPR RNA (crRNA). The polypeptide is CRISPR-associated protein Cas5 3 (cas5c) (Saccharolobus solfataricus (strain ATCC 35092 / DSM 1617 / JCM 11322 / P2) (Sulfolobus solfataricus)).